A 473-amino-acid polypeptide reads, in one-letter code: 3-isopropylmalate dehydratase large subunit (473 aa).

[4Fe-4S] cluster is bound by residues cysteine 353, cysteine 414, and cysteine 417.

This sequence belongs to the aconitase/IPM isomerase family. LeuC type 1 subfamily. As to quaternary structure, heterodimer of LeuC and LeuD. The cofactor is [4Fe-4S] cluster.

The catalysed reaction is (2R,3S)-3-isopropylmalate = (2S)-2-isopropylmalate. It participates in amino-acid biosynthesis; L-leucine biosynthesis; L-leucine from 3-methyl-2-oxobutanoate: step 2/4. In terms of biological role, catalyzes the isomerization between 2-isopropylmalate and 3-isopropylmalate, via the formation of 2-isopropylmaleate. This Cellvibrio japonicus (strain Ueda107) (Pseudomonas fluorescens subsp. cellulosa) protein is 3-isopropylmalate dehydratase large subunit.